The chain runs to 435 residues: tRNA modification GTPase MnmE (435 aa).

The (6S)-5-formyl-5,6,7,8-tetrahydrofolate site is built by Arg-20, Glu-77, and Lys-117. The TrmE-type G domain occupies 214–359 (GFKIVIVGAP…FMKELESFCL (146 aa)). GTP is bound by residues 224-229 (NSGKSS), 243-249 (TEEAGTT), and 268-271 (DTAG). The Mg(2+) site is built by Ser-228 and Thr-249. Lys-435 contributes to the (6S)-5-formyl-5,6,7,8-tetrahydrofolate binding site.

The protein belongs to the TRAFAC class TrmE-Era-EngA-EngB-Septin-like GTPase superfamily. TrmE GTPase family. In terms of assembly, homodimer. Heterotetramer of two MnmE and two MnmG subunits. It depends on K(+) as a cofactor.

It is found in the cytoplasm. Functionally, exhibits a very high intrinsic GTPase hydrolysis rate. Involved in the addition of a carboxymethylaminomethyl (cmnm) group at the wobble position (U34) of certain tRNAs, forming tRNA-cmnm(5)s(2)U34. The protein is tRNA modification GTPase MnmE of Bartonella henselae (strain ATCC 49882 / DSM 28221 / CCUG 30454 / Houston 1) (Rochalimaea henselae).